We begin with the raw amino-acid sequence, 25 residues long: Alpha-amylase inhibitor (25 aa).

As to quaternary structure, monomer or homodimer. In terms of processing, may exist both in a glycosylated and in an unglycosylated form.

The protein resides in the secreted. Inhibits alpha-amylases but not trypsin. Is more effective against insect alpha-amylases than those of mammals. This is Alpha-amylase inhibitor from Secale cereale (Rye).